We begin with the raw amino-acid sequence, 106 residues long: Large ribosomal subunit protein eL30 (106 aa).

Belongs to the eukaryotic ribosomal protein eL30 family.

The protein is Large ribosomal subunit protein eL30 of Methanococcus maripaludis (strain C7 / ATCC BAA-1331).